Reading from the N-terminus, the 147-residue chain is MSPTRDELLCTALDFVAQFAKLDPESVLSFLSPSCTLRSFPSSLGKPPLQTKEESKADFQGLKDFFHNFQLRVKDGAEPVVDEPARKVVLHIEGKGDSLVGRFETEYIYILQMNEEGTMVEDFFQFADSATRDAWGKKIEAHFSAKN.

Belongs to the trt14 isomerase family. As to quaternary structure, homodimer.

The protein operates within secondary metabolite biosynthesis; terpenoid biosynthesis. Part of the gene cluster B that mediates the biosynthesis of the fungal meroterpenoid acetoxydehydroaustin. The first step of the pathway is the synthesis of 3,5-dimethylorsellinic acid by the polyketide synthase ausA. 3,5-dimethylorsellinic acid is then prenylated by the polyprenyl transferase ausN. Further epoxidation by the FAD-dependent monooxygenase ausM and cyclization by the probable terpene cyclase ausL lead to the formation of protoaustinoid A. Protoaustinoid A is then oxidized to spiro-lactone preaustinoid A3 by the combined action of the FAD-binding monooxygenases ausB and ausC, and the dioxygenase ausE. Acid-catalyzed keto-rearrangement and ring contraction of the tetraketide portion of preaustinoid A3 by ausJ lead to the formation of preaustinoid A4. The aldo-keto reductase ausK, with the help of ausH, is involved in the next step by transforming preaustinoid A4 into isoaustinone which is in turn hydroxylated by the P450 monooxygenase ausI to form austinolide. The cytochrome P450 monooxygenase ausG then modifies austinolide to austinol. Austinol is further acetylated to austin by the O-acetyltransferase ausP, which spontaneously changes to dehydroaustin. The cytochrome P450 monooxygenase then converts dehydroaustin is into 7-dehydrodehydroaustin. The hydroxylation catalyzed by ausR permits the second O-acetyltransferase ausQ to add an additional acetyl group to the molecule, leading to the formation of acetoxydehydroaustin. Due to genetic rearrangements of the clusters and the subsequent loss of some enzymes, the end product of the Penicillium brasilianum austinoid biosynthesis clusters is acetoxydehydroaustin. This is Austinoid biosynthesis clusters protein H from Penicillium brasilianum.